We begin with the raw amino-acid sequence, 318 residues long: Acetyl-coenzyme A carboxylase carboxyl transferase subunit alpha (318 aa).

The CoA carboxyltransferase C-terminal domain maps to 34–295 (SIEEEITKLR…KATIKQQLAQ (262 aa)).

It belongs to the AccA family. As to quaternary structure, acetyl-CoA carboxylase is a heterohexamer composed of biotin carboxyl carrier protein (AccB), biotin carboxylase (AccC) and two subunits each of ACCase subunit alpha (AccA) and ACCase subunit beta (AccD).

It is found in the cytoplasm. The catalysed reaction is N(6)-carboxybiotinyl-L-lysyl-[protein] + acetyl-CoA = N(6)-biotinyl-L-lysyl-[protein] + malonyl-CoA. The protein operates within lipid metabolism; malonyl-CoA biosynthesis; malonyl-CoA from acetyl-CoA: step 1/1. Functionally, component of the acetyl coenzyme A carboxylase (ACC) complex. First, biotin carboxylase catalyzes the carboxylation of biotin on its carrier protein (BCCP) and then the CO(2) group is transferred by the carboxyltransferase to acetyl-CoA to form malonyl-CoA. The sequence is that of Acetyl-coenzyme A carboxylase carboxyl transferase subunit alpha from Pseudoalteromonas atlantica (strain T6c / ATCC BAA-1087).